The chain runs to 360 residues: Phospho-N-acetylmuramoyl-pentapeptide-transferase (360 aa).

A run of 10 helical transmembrane segments spans residues 21 to 41 (YLSF…LWMG), 73 to 93 (TMGG…WADL), 94 to 114 (TNPY…VGFV), 132 to 152 (WKYF…YAHG), 168 to 188 (VMPQ…VGTS), 199 to 219 (GLAI…AWAT), 239 to 259 (LVVV…FNTY), 263 to 283 (VFMG…IAVL), 288 to 308 (FVLV…ILQV), and 338 to 358 (VIVR…ATLK).

This sequence belongs to the glycosyltransferase 4 family. MraY subfamily. Requires Mg(2+) as cofactor.

Its subcellular location is the cell inner membrane. It catalyses the reaction UDP-N-acetyl-alpha-D-muramoyl-L-alanyl-gamma-D-glutamyl-meso-2,6-diaminopimeloyl-D-alanyl-D-alanine + di-trans,octa-cis-undecaprenyl phosphate = di-trans,octa-cis-undecaprenyl diphospho-N-acetyl-alpha-D-muramoyl-L-alanyl-D-glutamyl-meso-2,6-diaminopimeloyl-D-alanyl-D-alanine + UMP. The protein operates within cell wall biogenesis; peptidoglycan biosynthesis. In terms of biological role, catalyzes the initial step of the lipid cycle reactions in the biosynthesis of the cell wall peptidoglycan: transfers peptidoglycan precursor phospho-MurNAc-pentapeptide from UDP-MurNAc-pentapeptide onto the lipid carrier undecaprenyl phosphate, yielding undecaprenyl-pyrophosphoryl-MurNAc-pentapeptide, known as lipid I. The sequence is that of Phospho-N-acetylmuramoyl-pentapeptide-transferase from Vibrio cholerae serotype O1 (strain ATCC 39541 / Classical Ogawa 395 / O395).